The sequence spans 232 residues: Orotate phosphoribosyltransferase (232 aa).

Lys28 is a 5-phospho-alpha-D-ribose 1-diphosphate binding site. 36–37 serves as a coordination point for orotate; the sequence is FF. 5-phospho-alpha-D-ribose 1-diphosphate contacts are provided by residues 78–79, Arg108, Lys109, Lys112, His114, and 134–142; these read YK and DDVITAGTA. Orotate is bound by residues Thr138 and Arg166.

Belongs to the purine/pyrimidine phosphoribosyltransferase family. PyrE subfamily. In terms of assembly, homodimer.

It catalyses the reaction orotidine 5'-phosphate + diphosphate = orotate + 5-phospho-alpha-D-ribose 1-diphosphate. Its pathway is pyrimidine metabolism; UMP biosynthesis via de novo pathway; UMP from orotate: step 1/2. Catalyzes the transfer of a ribosyl phosphate group from 5-phosphoribose 1-diphosphate to orotate, leading to the formation of orotidine monophosphate (OMP). In Sordaria macrospora, this protein is Orotate phosphoribosyltransferase (URA5).